Reading from the N-terminus, the 87-residue chain is Antitoxin YefM (87 aa).

Belongs to the phD/YefM antitoxin family. Forms a complex with YoeB which inhibits its toxin activity.

Its function is as follows. Antitoxin component of a type II toxin-antitoxin (TA) system. A probable antitoxin for the putative mRNA interferase YeoB. The polypeptide is Antitoxin YefM (Streptomyces coelicolor (strain ATCC BAA-471 / A3(2) / M145)).